Here is a 2009-residue protein sequence, read N- to C-terminus: Sodium channel protein type 1 subunit alpha (2009 aa).

Residues 1–128 (MEQTVLVPPG…KIAIKILVHS (128 aa)) are Cytoplasmic-facing. Residues 28 to 48 (RIAEEKAKNPKPDKKDDDENG) are compositionally biased toward basic and acidic residues. The segment at 28 to 60 (RIAEEKAKNPKPDKKDDDENGPKPNSDLEAGKN) is disordered. An I repeat occupies 110–454 (ILTPFNPLRK…QQMLEQLKKQ (345 aa)). Residues 129–146 (LFSMLIMCTILTNCVFMT) form a helical membrane-spanning segment. The Extracellular portion of the chain corresponds to 147–152 (MSNPPD). Residues 153–177 (WTKNVEYTFTGIYTFESLIKIIARG) traverse the membrane as a helical segment. At 178 to 188 (FCLEDFTFLRD) the chain is on the cytoplasmic side. Residues 189–205 (PWNWLDFTVITFAYVTE) traverse the membrane as a helical segment. Residues 206-213 (FVDLGNVS) are Extracellular-facing. A glycan (N-linked (GlcNAc...) asparagine) is linked at Asn211. A helical transmembrane segment spans residues 214–235 (ALRTFRVLRALKTISVIPGLKT). At 236 to 245 (IVGALIQSVK) the chain is on the cytoplasmic side. Residues 246 to 269 (KLSDVMILTVFCLSVFALIGLQLF) traverse the membrane as a helical segment. Residues 270 to 369 (MGNLRNKCVQ…YGYTSFDTFS (100 aa)) lie on the Extracellular side of the membrane. Intrachain disulfides connect Cys277-Cys345 and Cys336-Cys351. Residues Asn284, Asn295, Asn301, Asn306, and Asn338 are each glycosylated (N-linked (GlcNAc...) asparagine). The segment at residues 370-384 (WAFLSLFRLMTQDFW) is an intramembrane region (pore-forming). Topologically, residues 385-397 (ENLYQLTLRAAGK) are extracellular. A helical transmembrane segment spans residues 398 to 423 (TYMIFFVLVIFLGSFYLINLILAVVA). Topologically, residues 424-768 (MAYEEQNQAT…HIVNLVVMDP (345 aa)) are cytoplasmic. Residues 458-528 (AQQAAAATAS…EFHKSESEDS (71 aa)) are disordered. A Phosphoserine modification is found at Ser470. Residues 479–492 (LSDSSSEASKLSSK) show a composition bias toward low complexity. The span at 495–506 (KERRNRRKKRKQ) shows a compositional bias: basic residues. Residues 507–528 (KEQSGGEEKDDDEFHKSESEDS) are compositionally biased toward basic and acidic residues. Ser523, Ser525, Ser550, Ser551, Ser607, and Ser730 each carry phosphoserine. The interval 584–628 (VGSENDFADDEHSTFEDNESRRDSLFVPRRHGERRNSNLSQTSRS) is disordered. The span at 593–607 (DEHSTFEDNESRRDS) shows a compositional bias: basic and acidic residues. Residues 750–1022 (CSPYWLKVKH…QIAVDRMHKG (273 aa)) form an II repeat. Residues 769 to 787 (FVDLAITICIVLNTLFMAM) traverse the membrane as a helical segment. The Extracellular portion of the chain corresponds to 788-797 (EHYPMTEHFN). A helical membrane pass occupies residues 798–820 (HVLTVGNLVFTGIFTAEMFLKII). The Cytoplasmic portion of the chain corresponds to 821-830 (AMDPYYYFQE). A helical transmembrane segment spans residues 831-849 (GWNIFDGFIVTLSLVELGL). At 850 to 854 (ANVEG) the chain is on the extracellular side. Residues 855-874 (LSVLRSFRLLRVFKLAKSWP) traverse the membrane as a helical segment. The Cytoplasmic segment spans residues 875–891 (TLNMLIKIIGNSVGALG). A helical membrane pass occupies residues 892 to 912 (NLTLVLAIIVFIFAVVGMQLF). At 913–938 (GKSYKDCVCKIATDCKLPRWHMNDFF) the chain is on the extracellular side. Residues Cys921 and Cys927 are joined by a disulfide bond. An intramembrane region (pore-forming) is located at residues 939-952 (HSFLIVFRVLCGEW). The Extracellular segment spans residues 953–965 (IETMWDCMEVAGQ). A disulfide bond links Cys959 and Cys968. A helical membrane pass occupies residues 966–992 (AMCLTVFMMVMVIRNLVVLNLFLALLL). Topologically, residues 993-1218 (SSFSADNLAA…RTCFRIVEHN (226 aa)) are cytoplasmic. The tract at residues 1129–1163 (TEDFSSESDLEESKEKLNESSSSSEGSTVDIGAPA) is disordered. An III repeat occupies 1200–1514 (RGKQWWNLRR…KKYYNAMKKL (315 aa)). A helical membrane pass occupies residues 1219 to 1237 (WFETFIVFMILLSSGALAF). At 1238-1250 (EDIYIDQRKTIKT) the chain is on the extracellular side. Residues 1251–1276 (MLEYADKVFTYIFILEMLLKWVAYGY) traverse the membrane as a helical segment. Topologically, residues 1277-1278 (QT) are cytoplasmic. The chain crosses the membrane as a helical span at residues 1279 to 1304 (YFTNAWCWLDFLIVDVSLVSLTANAL). Topologically, residues 1305–1313 (GYSELGAIK) are extracellular. The helical transmembrane segment at 1314-1332 (SLRTLRALRPLRALSRFEG) threads the bilayer. Residues 1333–1345 (MRVVVNALLGAIP) lie on the Cytoplasmic side of the membrane. A helical transmembrane segment spans residues 1346–1369 (SIMNVLLVCLIFWLIFSIMGVNLF). The Extracellular segment spans residues 1370–1415 (AGKFYHCVNTTTGDTFEITEVNNHSDCLKLIERNETARWKNVKVNF). Cys1376 and Cys1396 are joined by a disulfide. 3 N-linked (GlcNAc...) asparagine glycosylation sites follow: Asn1378, Asn1392, and Asn1403. The pore-forming intramembrane region spans 1416–1433 (DNVGFGYLSLLQVATFKG). Residues 1434-1457 (WMDIMYAAVDSRNVELQPKYEESL) are Extracellular-facing. A helical membrane pass occupies residues 1458–1483 (YMYLYFVIFIIFGSFFTLNLFIGVII). Residues 1484 to 1541 (DNFNQQKKKFGGQDIFMTEEQKKYYNAMKKLGSKKPQKPIPRPGNKFQGMVFDFVTRQ) are Cytoplasmic-facing. Ser1516 bears the Phosphoserine; by PKC mark. An IV repeat occupies 1523–1821 (IPRPGNKFQG…WEKFDPDATQ (299 aa)). A helical membrane pass occupies residues 1542 to 1560 (VFDISIMILICLNMVTMMV). The Extracellular segment spans residues 1561–1571 (ETDDQSDYVTS). Positions 1561–1571 (ETDDQSDYVTS) are S1-S2 loop of repeat IV. The helical transmembrane segment at 1572–1593 (ILSRINLVFIVLFTGECVLKLI) threads the bilayer. Residues 1594 to 1601 (SLRHYYFT) are Cytoplasmic-facing. A helical transmembrane segment spans residues 1602-1623 (IGWNIFDFVVVILSIVGMFLAE). An S3b-S4 loop of repeat IV region spans residues 1619 to 1636 (MFLAELIEKYFVSPTLFR). At 1624-1636 (LIEKYFVSPTLFR) the chain is on the extracellular side. Residues 1637-1655 (VIRLARIGRILRLIKGAKG) traverse the membrane as a helical segment. At 1656-1665 (IRTLLFALMM) the chain is on the cytoplasmic side. Residues 1666-1688 (SLPALFNIGLLLFLVMFIYAIFG) traverse the membrane as a helical segment. At 1689–1711 (MSNFAYVKREVGIDDMFNFETFG) the chain is on the extracellular side. The pore-forming intramembrane region spans 1712–1726 (NSMICLFQITTSAGW). Residues 1727 to 1759 (DGLLAPILNSKPPDCDPNKVNPGSSVKGDCGNP) lie on the Extracellular side of the membrane. A disulfide bridge connects residues Cys1741 and Cys1756. The helical transmembrane segment at 1760–1788 (SVGIFFFVSYIIISFLVVVNMYIAVILEN) threads the bilayer. Over 1789-2009 (FSVATEESAE…EGKDEKAKGK (221 aa)) the chain is Cytoplasmic. The 30-residue stretch at 1915–1944 (EEVSAVIIQRAYRRHLLKRTVKQASFTYNK) folds into the IQ domain. Residues 1986 to 2009 (YDRVTKPIVEKHEQEGKDEKAKGK) form a disordered region. Positions 1988–2009 (RVTKPIVEKHEQEGKDEKAKGK) are enriched in basic and acidic residues.

It belongs to the sodium channel (TC 1.A.1.10) family. Nav1.1/SCN1A subfamily. The Nav1.1 voltage-gated sodium channel consists of an ion-conducting alpha subunit SCN1A which is functional on its own regulated by one or more beta-1 (SCN1B), beta-2 (SCN2B), beta-3 (SCN3B) and beta-4 (SCN4B) subunits. SCN1B and SCN3B are non-covalently associated with SCN1A. SCN2B and SCN4B are disulfide-linked to SCN1A. SCN1B regulates both the expression at the plasma membrane and the voltage dependence of Nav1.1 inactivation. SCN3B and SCN4B reduce Nav1.1 conductance. Probably interacts with TMEM233; modulates the gating properties of NaV1.1. Interacts with FGF13; regulates the steady-state inactivation of Nav.1.1. In terms of processing, phosphorylation at Ser-1516 by PKC in a highly conserved cytoplasmic loop slows inactivation of the sodium channel and reduces peak sodium currents.

It is found in the cell membrane. It catalyses the reaction Na(+)(in) = Na(+)(out). With respect to regulation, activated by the spider toxins Hm1a and Hm1b (H.maculata, AC P60992 and AC P0DOC5) eliciting acute pain and mechanical allodynia. Inhibited by the conotoxin GVIIJ. Pore-forming subunit of Nav1.1, a voltage-gated sodium (Nav) channel that directly mediates the depolarizing phase of action potentials in excitable membranes. Navs, also called VGSCs (voltage-gated sodium channels) or VDSCs (voltage-dependent sodium channels), operate by switching between closed and open conformations depending on the voltage difference across the membrane. In the open conformation they allow Na(+) ions to selectively pass through the pore, along their electrochemical gradient. The influx of Na(+) ions provokes membrane depolarization, initiating the propagation of electrical signals throughout cells and tissues. By regulating the excitability of neurons, ensures that they respond appropriately to synaptic inputs, maintaining the balance between excitation and inhibition in brain neural circuits. Nav1.1 plays a role in controlling the excitability and action potential propagation from somatosensory neurons, thereby contributing to the sensory perception of mechanically-induced pain. This Rattus norvegicus (Rat) protein is Sodium channel protein type 1 subunit alpha.